A 480-amino-acid chain; its full sequence is 11S globulin subunit beta (480 aa).

Positions 1–21 are cleaved as a signal peptide; the sequence is MARSSLFTFLCLAVFINGCLS. Q22 is modified (pyrrolidone carboxylic acid). 2 disulfide bridges follow: C48–C81 and C124–C303. 2 Cupin type-1 domains span residues 51 to 251 and 309 to 458; these read ENLR…GLVR and QNIG…EEAQ. Positions 408 and 468 each coordinate Mg(2+).

It belongs to the 11S seed storage protein (globulins) family. Hexamer; each subunit is composed of an acidic and a basic chain derived from a single precursor and linked by a disulfide bond.

Its function is as follows. This is a seed storage protein. This is 11S globulin subunit beta from Cucurbita maxima (Pumpkin).